The primary structure comprises 274 residues: Tryptophan synthase alpha chain (274 aa).

Catalysis depends on proton acceptor residues Glu-49 and Asp-60.

The protein belongs to the TrpA family. In terms of assembly, tetramer of two alpha and two beta chains.

The catalysed reaction is (1S,2R)-1-C-(indol-3-yl)glycerol 3-phosphate + L-serine = D-glyceraldehyde 3-phosphate + L-tryptophan + H2O. Its pathway is amino-acid biosynthesis; L-tryptophan biosynthesis; L-tryptophan from chorismate: step 5/5. In terms of biological role, the alpha subunit is responsible for the aldol cleavage of indoleglycerol phosphate to indole and glyceraldehyde 3-phosphate. The chain is Tryptophan synthase alpha chain from Gluconacetobacter diazotrophicus (strain ATCC 49037 / DSM 5601 / CCUG 37298 / CIP 103539 / LMG 7603 / PAl5).